The sequence spans 165 residues: Phosphopantetheine adenylyltransferase (165 aa).

T10 is a substrate binding site. Residues 10–11 (TF) and H18 contribute to the ATP site. The substrate site is built by K42, L75, and R89. Residues 90–92 (GVR), E100, and 125–131 (YTYVAST) contribute to the ATP site.

It belongs to the bacterial CoaD family. As to quaternary structure, homohexamer. The cofactor is Mg(2+).

Its subcellular location is the cytoplasm. It catalyses the reaction (R)-4'-phosphopantetheine + ATP + H(+) = 3'-dephospho-CoA + diphosphate. It participates in cofactor biosynthesis; coenzyme A biosynthesis; CoA from (R)-pantothenate: step 4/5. Its function is as follows. Reversibly transfers an adenylyl group from ATP to 4'-phosphopantetheine, yielding dephospho-CoA (dPCoA) and pyrophosphate. This is Phosphopantetheine adenylyltransferase from Chlorobaculum tepidum (strain ATCC 49652 / DSM 12025 / NBRC 103806 / TLS) (Chlorobium tepidum).